Consider the following 250-residue polypeptide: MSEKQTFADKKRKTVEQAEFTEDGRYLRKVRSFVLRTGRLSDYQRDMMNNNWANLGLDYQNTPFNFEQIFGNNNPVVLEIGFGMGRSLVEMAKQNPDRNYIGIEVHTPGVGACIAYALEKGVKNLRVICHDATEILRDAIADGSLGGLQLYFPDPWQKAKHHKRRIVQPEFITRVLTKLGDNGFIHFATDWENYAEHMLEVLRQFDKELRNTSATNDFIPRPDFRPLTKFEERAHRLGHGVWDLYFVKQA.

Positions 79, 104, 131, and 154 each coordinate S-adenosyl-L-methionine. Asp154 is an active-site residue. Substrate is bound by residues Lys158, Asp190, and 228–231 (TKFE).

Belongs to the class I-like SAM-binding methyltransferase superfamily. TrmB family.

The catalysed reaction is guanosine(46) in tRNA + S-adenosyl-L-methionine = N(7)-methylguanosine(46) in tRNA + S-adenosyl-L-homocysteine. Its pathway is tRNA modification; N(7)-methylguanine-tRNA biosynthesis. Catalyzes the formation of N(7)-methylguanine at position 46 (m7G46) in tRNA. This Actinobacillus pleuropneumoniae serotype 5b (strain L20) protein is tRNA (guanine-N(7)-)-methyltransferase.